The following is a 453-amino-acid chain: Bifunctional protein GlmU (453 aa).

Residues 1–227 are pyrophosphorylase; the sequence is MTQDIVILAA…EAEVAGVNDR (227 aa). Residues 8–11, K22, Q73, 78–79, 100–102, G137, E152, N167, and N225 contribute to the UDP-N-acetyl-alpha-D-glucosamine site; these read LAAG, GT, and YGD. D102 contributes to the Mg(2+) binding site. Mg(2+) is bound at residue N225. The segment at 228–248 is linker; that stretch reads VQLAALERELQNQQAVSLMQN. An N-acetyltransferase region spans residues 249-453; the sequence is GATLLDPSRI…KDNWPRPIKK (205 aa). 2 residues coordinate UDP-N-acetyl-alpha-D-glucosamine: R331 and K349. The active-site Proton acceptor is H361. 2 residues coordinate UDP-N-acetyl-alpha-D-glucosamine: Y364 and N375. Acetyl-CoA-binding positions include A378, 384–385, S403, A421, and R438; that span reads NY.

In the N-terminal section; belongs to the N-acetylglucosamine-1-phosphate uridyltransferase family. It in the C-terminal section; belongs to the transferase hexapeptide repeat family. In terms of assembly, homotrimer. Mg(2+) serves as cofactor.

It localises to the cytoplasm. The catalysed reaction is alpha-D-glucosamine 1-phosphate + acetyl-CoA = N-acetyl-alpha-D-glucosamine 1-phosphate + CoA + H(+). The enzyme catalyses N-acetyl-alpha-D-glucosamine 1-phosphate + UTP + H(+) = UDP-N-acetyl-alpha-D-glucosamine + diphosphate. The protein operates within nucleotide-sugar biosynthesis; UDP-N-acetyl-alpha-D-glucosamine biosynthesis; N-acetyl-alpha-D-glucosamine 1-phosphate from alpha-D-glucosamine 6-phosphate (route II): step 2/2. It participates in nucleotide-sugar biosynthesis; UDP-N-acetyl-alpha-D-glucosamine biosynthesis; UDP-N-acetyl-alpha-D-glucosamine from N-acetyl-alpha-D-glucosamine 1-phosphate: step 1/1. It functions in the pathway bacterial outer membrane biogenesis; LPS lipid A biosynthesis. In terms of biological role, catalyzes the last two sequential reactions in the de novo biosynthetic pathway for UDP-N-acetylglucosamine (UDP-GlcNAc). The C-terminal domain catalyzes the transfer of acetyl group from acetyl coenzyme A to glucosamine-1-phosphate (GlcN-1-P) to produce N-acetylglucosamine-1-phosphate (GlcNAc-1-P), which is converted into UDP-GlcNAc by the transfer of uridine 5-monophosphate (from uridine 5-triphosphate), a reaction catalyzed by the N-terminal domain. The chain is Bifunctional protein GlmU from Marinomonas sp. (strain MWYL1).